The primary structure comprises 1040 residues: Multidrug resistance protein MdtB (1040 aa).

12 helical membrane-spanning segments follow: residues 16–36 (FIMRPVATTLLMVAILLAGII), 347–367 (LMMAIALVVMIIYLFLRNIPA), 369–389 (IIPGVAVPLSLIGTFAVMVFL), 396–416 (LTLMALTIATGFVVDDAIVVI), 440–460 (IGFTIISLTFSLIAVLIPLLF), 472–492 (FAITLAVAILISAVVSLTLTP), 537–557 (WLTLSVALSTLLLSVLLWVFI), 863–883 (LGSTVWLIVAAVVAMYIVLGI), 888–908 (FIHPITILSTLPTAGVGALLA), 911–931 (IAGSELDVIAIIGIILLIGIV), 968–988 (ILMTTLAALLGALPLMLSTGV), and 998–1018 (IGMVGGLVVSQVLTLFTTPVI).

This sequence belongs to the resistance-nodulation-cell division (RND) (TC 2.A.6) family. MdtB subfamily. As to quaternary structure, part of a tripartite efflux system composed of MdtA, MdtB and MdtC. MdtB forms a heteromultimer with MdtC.

The protein resides in the cell inner membrane. Its function is as follows. The MdtABC tripartite complex confers resistance against novobiocin and deoxycholate. This is Multidrug resistance protein MdtB from Escherichia fergusonii (strain ATCC 35469 / DSM 13698 / CCUG 18766 / IAM 14443 / JCM 21226 / LMG 7866 / NBRC 102419 / NCTC 12128 / CDC 0568-73).